A 188-amino-acid chain; its full sequence is Methylamine dehydrogenase light chain (188 aa).

A signal peptide (tat-type signal) is located at residues 1-57 (MLGNFRFDDMVEKLSRRVAGRTSRRGAIGRLGTVLAGAALVPLLPVDRRGRVSRANA). 6 disulfides stabilise this stretch: C80/C145, C86/C118, C93/C178, C95/C143, C103/C134, and C135/C166. W114 bears the Tryptophylquinone mark. The tryptophan tryptophylquinone (Trp-Trp) cross-link spans 114–165 (WVASCYNPTDGQSYLIAYRDCCGYNVSGRCPCLNTEGELPVYRPEFANDIIW).

It belongs to the aromatic amine dehydrogenase light chain family. In terms of assembly, heterotetramer of two light and two heavy chains. Requires tryptophan tryptophylquinone residue as cofactor. Post-translationally, predicted to be exported by the Tat system. The position of the signal peptide cleavage has been experimentally proven. In terms of processing, tryptophan tryptophylquinone (TTQ) is formed by oxidation of the indole ring of a tryptophan to form tryptophylquinone followed by covalent cross-linking with another tryptophan residue.

It is found in the periplasm. It carries out the reaction 2 oxidized [amicyanin] + methylamine + H2O = 2 reduced [amicyanin] + formaldehyde + NH4(+) + 2 H(+). The protein operates within one-carbon metabolism; methylamine degradation; formaldehyde from methylamine: step 1/1. Methylamine dehydrogenase carries out the oxidation of methylamine. Electrons are passed from methylamine dehydrogenase to amicyanin. This is Methylamine dehydrogenase light chain (mauA) from Paracoccus versutus (Thiobacillus versutus).